Here is a 55-residue protein sequence, read N- to C-terminus: Sporulation killing factor (55 aa).

Residues 1 to 29 (MKRNQKEWESVSKKGLMKPGGTSIVKAAG) constitute a propeptide that is removed on maturation. Cysteine 30 and cysteine 45 are joined by a disulfide. The segment at residues 30-55 (CMGCWASKSIAMTRVCALPHPAMRAI) is a cross-link (cyclopeptide (Cys-Ile)). A cross-link (2-(S-cysteinyl)-methionine (Cys-Met)) is located at residues 33–41 (CWASKSIAM).

In terms of processing, this is a cyclic peptide. The first step in SKF maturation is probably thioether bond formation.

It is found in the secreted. Functionally, produces a 26-residue extracellular sporulation killing factor (SKF) that induces the lysis of other B.subtilis cells that have not entered the sporulation pathway, providing a source of nutrients to support sporulation, and at the same time delaying commitment to the energetically expensive and irreversible onset of sporulation. Can also inhibit growth of other bacteria at high concentrations. Addition of SKF to solid cultures induces killing, but it is much less effective than SDP (AC O34344). Has a role in protecting the secreted lipase LipA against proteolysis, either by modulating its folding or by acting as a protease inhibitor. The polypeptide is Sporulation killing factor (Bacillus subtilis (strain 168)).